Reading from the N-terminus, the 335-residue chain is Putative peroxisomal biogenesis factor 19 (335 aa).

2 disordered regions span residues 14–70 (LETQ…LGND) and 104–124 (YNKD…PSEE). Composition is skewed to low complexity over residues 22–55 (PTTT…PSTI) and 109–119 (NNNSDDSNNGG).

The protein belongs to the peroxin-19 family.

It localises to the peroxisome. This is Putative peroxisomal biogenesis factor 19 (pex19) from Dictyostelium discoideum (Social amoeba).